Reading from the N-terminus, the 190-residue chain is T-cell receptor gamma chain C region 5/10-13 (190 aa).

Positions 1-157 (DKRTDSDFSP…LQVTTTYAFY (157 aa)) are c region. Residues 158–178 (TYLILFFKSMVHLAFVVFCLF) traverse the membrane as a helical segment. At 179 to 190 (RRAAMSCDDQRS) the chain is on the cytoplasmic side.

The protein resides in the membrane. The polypeptide is T-cell receptor gamma chain C region 5/10-13 (Mus musculus (Mouse)).